Consider the following 1337-residue polypeptide: DNA-directed RNA polymerase subunit beta' (1337 aa).

Cys60, Cys62, Cys75, and Cys78 together coordinate Zn(2+). Mg(2+) contacts are provided by Asp536, Asp538, and Asp540. The Zn(2+) site is built by Cys895, Cys974, Cys981, and Cys984.

This sequence belongs to the RNA polymerase beta' chain family. The RNAP catalytic core consists of 2 alpha, 1 beta, 1 beta' and 1 omega subunit. When a sigma factor is associated with the core the holoenzyme is formed, which can initiate transcription. Requires Mg(2+) as cofactor. Zn(2+) is required as a cofactor.

It carries out the reaction RNA(n) + a ribonucleoside 5'-triphosphate = RNA(n+1) + diphosphate. Its function is as follows. DNA-dependent RNA polymerase catalyzes the transcription of DNA into RNA using the four ribonucleoside triphosphates as substrates. The chain is DNA-directed RNA polymerase subunit beta' from Bifidobacterium adolescentis (strain ATCC 15703 / DSM 20083 / NCTC 11814 / E194a).